A 228-amino-acid chain; its full sequence is Protein ARV 2 (228 aa).

The next 2 helical transmembrane spans lie at 37–57 (EVAD…LILH) and 80–100 (LLWK…LLLR). N107 carries N-linked (GlcNAc...) asparagine glycosylation. Helical transmembrane passes span 123 to 143 (VLSA…LMLV), 150 to 170 (ILLT…MPVW), and 176 to 196 (VIFI…KVMT).

Belongs to the ARV1 family. In terms of tissue distribution, restricted to tissues in which cells are actively dividing or expanding. Mostly expressed in roots and flowers, and, to a lower extent, in stems and leaves.

Its subcellular location is the endoplasmic reticulum membrane. In terms of biological role, mediator of sterol homeostasis involved in sterol uptake, trafficking and distribution into membranes. Also regulates the sphingolipid metabolism. In Arabidopsis thaliana (Mouse-ear cress), this protein is Protein ARV 2.